The following is a 198-amino-acid chain: Proteasome subunit beta type-4 (198 aa).

N-acetylmethionine is present on methionine 1. Phosphoserine is present on serine 76.

It belongs to the peptidase T1B family. In terms of assembly, the 26S proteasome consists of a 20S proteasome core and two 19S regulatory subunits. The 20S proteasome core is composed of 28 subunits that are arranged in four stacked rings, resulting in a barrel-shaped structure. The two end rings are each formed by seven alpha subunits, and the two central rings are each formed by seven beta subunits. The catalytic chamber with the active sites is on the inside of the barrel.

It is found in the cytoplasm. The protein localises to the nucleus. Functionally, non-catalytic component of the proteasome which degrades poly-ubiquitinated proteins in the cytoplasm and in the nucleus. It is essential for the regulated turnover of proteins and for the removal of misfolded proteins. The proteasome is a multicatalytic proteinase complex that is characterized by its ability to cleave peptides with Arg, Phe, Tyr, Leu, and Glu adjacent to the leaving group at neutral or slightly basic pH. It has an ATP-dependent proteolytic activity. This subunit has a chymotrypsin-like activity. The sequence is that of Proteasome subunit beta type-4 (PRE1) from Saccharomyces cerevisiae (strain ATCC 204508 / S288c) (Baker's yeast).